The chain runs to 216 residues: LexA repressor (216 aa).

The segment at residues 28-48 (RAEIAAELGFSSANSAEEHLR) is a DNA-binding region (H-T-H motif). Active-site for autocatalytic cleavage activity residues include Ser-134 and Lys-171.

Belongs to the peptidase S24 family. As to quaternary structure, homodimer.

The catalysed reaction is Hydrolysis of Ala-|-Gly bond in repressor LexA.. In terms of biological role, represses a number of genes involved in the response to DNA damage (SOS response), including recA and lexA. In the presence of single-stranded DNA, RecA interacts with LexA causing an autocatalytic cleavage which disrupts the DNA-binding part of LexA, leading to derepression of the SOS regulon and eventually DNA repair. The chain is LexA repressor from Paraburkholderia phytofirmans (strain DSM 17436 / LMG 22146 / PsJN) (Burkholderia phytofirmans).